The sequence spans 787 residues: Zinc finger protein 227 (787 aa).

Residues 23-94 (VTFKDVAVVF…ERETQRNGHS (72 aa)) enclose the KRAB domain. C2H2-type zinc fingers lie at residues 243–275 (HPCR…LQTH), 312–334 (YRCD…YRTH), 340–362 (YRCE…QRVH), 368–390 (YKCE…QRVH), 396–418 (YKCE…QRVH), 424–446 (YKCD…RRVH), 452–474 (YRCE…FRVH), 480–502 (YTCK…QNVH), 508–530 (FKCE…QRVH), 536–558 (YRCD…QVIH), 564–586 (YTCE…QRVH), 592–614 (YKCE…QRVH), 620–642 (YKCG…QRVH), 648–670 (YKCD…QRGH), 676–698 (YKCE…QRVH), 704–726 (HKCE…LSVH), 732–754 (FKCE…QRVH), and 760–782 (YKCN…QKVH).

The protein belongs to the krueppel C2H2-type zinc-finger protein family.

The protein localises to the nucleus. May be involved in transcriptional regulation. In Bos taurus (Bovine), this protein is Zinc finger protein 227 (ZNF227).